We begin with the raw amino-acid sequence, 250 residues long: MGKSYPTVSPDYQKAIEKAKRKLRGFIAEKKCAPLILRLAWHSAGTFDSKTKTGGPFGTIKHQAELAHGANNGLDIAVRLLEPIKEQFPIVSYADFYQLAGVVAVEITGGPEVPFHPGREDKPEPPPEGRLPDATKGSDHLRDVFGKAMGLSDQDIVALSGGHTIGAAHKERSGFEGPWTSNPLIFDNSYFTELLTGEKDGLLQLPSDKALLTDSVFRPLVEKYAADEDVFFADYAEAHLKLSELGFAEA.

The Proton acceptor role is filled by histidine 42. The interval 113 to 137 (VPFHPGREDKPEPPPEGRLPDATKG) is disordered. Residues 117-137 (PGREDKPEPPPEGRLPDATKG) show a composition bias toward basic and acidic residues. Histidine 163 contributes to the heme b binding site. 5 residues coordinate K(+): threonine 164, threonine 180, asparagine 182, isoleucine 185, and aspartate 187.

The protein belongs to the peroxidase family. Ascorbate peroxidase subfamily. Heme b is required as a cofactor.

Its subcellular location is the cytoplasm. It carries out the reaction L-ascorbate + H2O2 = L-dehydroascorbate + 2 H2O. Plays a key role in hydrogen peroxide removal. The sequence is that of L-ascorbate peroxidase, cytosolic (APX1) from Pisum sativum (Garden pea).